The chain runs to 457 residues: Argininosuccinate lyase (457 aa).

This sequence belongs to the lyase 1 family. Argininosuccinate lyase subfamily.

Its subcellular location is the cytoplasm. The catalysed reaction is 2-(N(omega)-L-arginino)succinate = fumarate + L-arginine. It participates in amino-acid biosynthesis; L-arginine biosynthesis; L-arginine from L-ornithine and carbamoyl phosphate: step 3/3. This is Argininosuccinate lyase from Shigella boydii serotype 18 (strain CDC 3083-94 / BS512).